A 101-amino-acid polypeptide reads, in one-letter code: Protein SPIRAL1-like 3 (101 aa).

Over residues 1-22 the composition is skewed to gly residues; it reads MGRGVSSGGGQSSLGYLFGGGE. 2 disordered regions span residues 1–54 and 73–101; these read MGRG…GIQS and TDRPSTKVQAAPGGGSSLDYLFSGNKDGK.

It belongs to the SPIRAL1 family.

Acts in maintaining the cortical microtubules organization essential for anisotropic cell growth. This is Protein SPIRAL1-like 3 from Oryza sativa subsp. japonica (Rice).